We begin with the raw amino-acid sequence, 276 residues long: Diaminopimelate epimerase (276 aa).

The substrate site is built by Asn13, Gln46, and Asn66. Residue Cys75 is the Proton donor of the active site. Residues Gly76–Asn77, Asn159, Asn192, and Glu210–Arg211 each bind substrate. Residue Cys219 is the Proton acceptor of the active site. Substrate is bound at residue Gly220–Ser221.

The protein belongs to the diaminopimelate epimerase family. As to quaternary structure, homodimer.

Its subcellular location is the cytoplasm. The catalysed reaction is (2S,6S)-2,6-diaminopimelate = meso-2,6-diaminopimelate. It participates in amino-acid biosynthesis; L-lysine biosynthesis via DAP pathway; DL-2,6-diaminopimelate from LL-2,6-diaminopimelate: step 1/1. In terms of biological role, catalyzes the stereoinversion of LL-2,6-diaminopimelate (L,L-DAP) to meso-diaminopimelate (meso-DAP), a precursor of L-lysine and an essential component of the bacterial peptidoglycan. The polypeptide is Diaminopimelate epimerase (Coxiella burnetii (strain CbuK_Q154) (Coxiella burnetii (strain Q154))).